Reading from the N-terminus, the 284-residue chain is 4-diphosphocytidyl-2-C-methyl-D-erythritol kinase (284 aa).

The active site involves Lys-14. 97 to 107 (PMGGGVGGGSS) contributes to the ATP binding site. Asp-139 is a catalytic residue.

Belongs to the GHMP kinase family. IspE subfamily.

It carries out the reaction 4-CDP-2-C-methyl-D-erythritol + ATP = 4-CDP-2-C-methyl-D-erythritol 2-phosphate + ADP + H(+). It participates in isoprenoid biosynthesis; isopentenyl diphosphate biosynthesis via DXP pathway; isopentenyl diphosphate from 1-deoxy-D-xylulose 5-phosphate: step 3/6. Catalyzes the phosphorylation of the position 2 hydroxy group of 4-diphosphocytidyl-2C-methyl-D-erythritol. This Pseudoalteromonas translucida (strain TAC 125) protein is 4-diphosphocytidyl-2-C-methyl-D-erythritol kinase.